A 325-amino-acid chain; its full sequence is Heme A synthase (325 aa).

5 consecutive transmembrane segments (helical) span residues 6–26 (WLAVCILLILSMVSIGGFTRL), 88–108 (LVGRILGLVFFIGLVYFFVVG), 116–136 (LRLCFALVLGVIQGFVGWYMV), 155–175 (LFCASLLFMVLVYEFLSPTVI), and 184–204 (LVGCSLMFLLSMQIILGGLVA). H246 contributes to the heme binding site. The next 3 membrane-spanning stretches (helical) occupy residues 248–268 (MSAFLLTFICLVCLVISFFYD), 275–295 (VFLVASMMLLQMFFGVLTLLF), and 297–317 (IPIDIALLHQIMAFILLGICV). H305 is a heme binding site.

The protein belongs to the COX15/CtaA family. Type 2 subfamily. As to quaternary structure, interacts with CtaB. Heme b is required as a cofactor.

The protein localises to the cell membrane. It carries out the reaction Fe(II)-heme o + 2 A + H2O = Fe(II)-heme a + 2 AH2. It participates in porphyrin-containing compound metabolism; heme A biosynthesis; heme A from heme O: step 1/1. Functionally, catalyzes the conversion of heme O to heme A by two successive hydroxylations of the methyl group at C8. The first hydroxylation forms heme I, the second hydroxylation results in an unstable dihydroxymethyl group, which spontaneously dehydrates, resulting in the formyl group of heme A. The polypeptide is Heme A synthase (Neorickettsia sennetsu (strain ATCC VR-367 / Miyayama) (Ehrlichia sennetsu)).